The sequence spans 290 residues: Prepilin leader peptidase/N-methyltransferase (290 aa).

The chain crosses the membrane as a helical span at residues 13-33 (AFVLCTILLGLLVGSFLNVVV). Positions 72, 75, 97, and 100 each coordinate Zn(2+). Transmembrane regions (helical) follow at residues 128–148 (FTWQ…MSLI), 158–178 (VLVL…LFAS), 183–203 (LFGA…FKLV), 228–248 (ILPL…VIML), and 261–276 (FGPY…LLWG).

The protein belongs to the peptidase A24 family. Zn(2+) serves as cofactor.

The protein localises to the cell inner membrane. It carries out the reaction Typically cleaves a -Gly-|-Phe- bond to release an N-terminal, basic peptide of 5-8 residues from type IV prepilin, and then N-methylates the new N-terminal amino group, the methyl donor being S-adenosyl-L-methionine.. Plays an essential role in type IV pili and type II pseudopili formation by proteolytically removing the leader sequence from substrate proteins and subsequently monomethylating the alpha-amino group of the newly exposed N-terminal phenylalanine. Substrates include proteins required for pilus biogenesis PilE, PilV, PilW, and PilX as well as some components of the type II general secretory apparatus GspG, GspH, GspI and GspJ. The polypeptide is Prepilin leader peptidase/N-methyltransferase (pilD) (Pseudomonas aeruginosa (strain ATCC 15692 / DSM 22644 / CIP 104116 / JCM 14847 / LMG 12228 / 1C / PRS 101 / PAO1)).